The primary structure comprises 201 residues: High mobility group protein homolog 068R (201 aa).

2 consecutive DNA-binding regions (HMG box) follow at residues 70–138 (PKRN…ELEK) and 143–201 (TPSK…KAAK).

This sequence belongs to the IIV-6 401R family.

The protein localises to the host nucleus. In Invertebrate iridescent virus 3 (IIV-3), this protein is High mobility group protein homolog 068R.